A 375-amino-acid chain; its full sequence is Zinc finger CCCH domain-containing protein 57 (375 aa).

C3H1-type zinc fingers lie at residues 42–70 (RHGE…HPHD), 87–115 (RIGQ…HPRN), 133–161 (RPNE…HPQT), 243–271 (RPGQ…HPRD), and 289–317 (RPGE…HPMR). Residues 352–375 (SVEAKPTSLPETTSAKDTIVDAQH) form a disordered region.

Its subcellular location is the nucleus. The polypeptide is Zinc finger CCCH domain-containing protein 57 (ZFN3) (Arabidopsis thaliana (Mouse-ear cress)).